The chain runs to 429 residues: Serine--tRNA ligase (429 aa).

235-237 (TAE) serves as a coordination point for L-serine. 266–268 (RSE) contributes to the ATP binding site. An L-serine-binding site is contributed by Glu289. 353–356 (EISS) is a binding site for ATP. Residue Ser389 participates in L-serine binding.

The protein belongs to the class-II aminoacyl-tRNA synthetase family. Type-1 seryl-tRNA synthetase subfamily. In terms of assembly, homodimer. The tRNA molecule binds across the dimer.

It is found in the cytoplasm. The enzyme catalyses tRNA(Ser) + L-serine + ATP = L-seryl-tRNA(Ser) + AMP + diphosphate + H(+). The catalysed reaction is tRNA(Sec) + L-serine + ATP = L-seryl-tRNA(Sec) + AMP + diphosphate + H(+). It functions in the pathway aminoacyl-tRNA biosynthesis; selenocysteinyl-tRNA(Sec) biosynthesis; L-seryl-tRNA(Sec) from L-serine and tRNA(Sec): step 1/1. Its function is as follows. Catalyzes the attachment of serine to tRNA(Ser). Is also able to aminoacylate tRNA(Sec) with serine, to form the misacylated tRNA L-seryl-tRNA(Sec), which will be further converted into selenocysteinyl-tRNA(Sec). The polypeptide is Serine--tRNA ligase (Actinobacillus succinogenes (strain ATCC 55618 / DSM 22257 / CCUG 43843 / 130Z)).